The chain runs to 432 residues: Adenylosuccinate synthetase (432 aa).

GTP-binding positions include 13–19 (GDEGKGK) and 41–43 (GHT). Aspartate 14 (proton acceptor) is an active-site residue. Mg(2+) contacts are provided by aspartate 14 and glycine 41. IMP-binding positions include 14–17 (DEGK), 39–42 (NAGH), threonine 130, arginine 144, glutamine 225, threonine 240, and arginine 304. The active-site Proton donor is the histidine 42. 300-306 (ATTGRRR) is a substrate binding site. GTP contacts are provided by residues arginine 306, 332–334 (KLD), and 415–417 (STG).

It belongs to the adenylosuccinate synthetase family. As to quaternary structure, homodimer. It depends on Mg(2+) as a cofactor.

The protein localises to the cytoplasm. It catalyses the reaction IMP + L-aspartate + GTP = N(6)-(1,2-dicarboxyethyl)-AMP + GDP + phosphate + 2 H(+). Its pathway is purine metabolism; AMP biosynthesis via de novo pathway; AMP from IMP: step 1/2. In terms of biological role, plays an important role in the de novo pathway of purine nucleotide biosynthesis. Catalyzes the first committed step in the biosynthesis of AMP from IMP. This Cronobacter sakazakii (strain ATCC BAA-894) (Enterobacter sakazakii) protein is Adenylosuccinate synthetase.